Here is a 76-residue protein sequence, read N- to C-terminus: Conotoxin Vc6.9 (76 aa).

The signal sequence occupies residues 1–19 (MEKLTILLLVAAVLMSTQA). A propeptide spanning residues 20-41 (LMQEQRQKAKINLFSKRKPSAE) is cleaved from the precursor. 3 cysteine pairs are disulfide-bonded: Cys49-Cys63, Cys56-Cys67, and Cys62-Cys72.

It belongs to the conotoxin O2 superfamily. As to expression, expressed by the venom duct.

It localises to the secreted. Functionally, inhibits voltage-gated ion channels. The protein is Conotoxin Vc6.9 of Conus victoriae (Queen Victoria cone).